A 293-amino-acid chain; its full sequence is Rhomboid-like protease 1 (293 aa).

The interval glutamate 18–alanine 40 is disordered. Transmembrane regions (helical) follow at residues valine 62 to threonine 82, leucine 112 to glutamine 132, phenylalanine 148 to phenylalanine 168, valine 174 to threonine 194, leucine 217 to leucine 237, and alanine 262 to valine 282. Serine 177 serves as the catalytic Nucleophile. The active site involves histidine 232.

Belongs to the peptidase S54 family.

The protein localises to the cytoplasmic vesicle. It is found in the secretory vesicle. It localises to the microneme membrane. The enzyme catalyses Cleaves type-1 transmembrane domains using a catalytic dyad composed of serine and histidine that are contributed by different transmembrane domains.. In terms of biological role, serine protease involved in intramembrane proteolysis and the subsequent release of polypeptides from their membrane anchors. Has no detectable activity towards MIC2. This chain is Rhomboid-like protease 1 (ROM1), found in Toxoplasma gondii.